We begin with the raw amino-acid sequence, 448 residues long: Probable glycine dehydrogenase (decarboxylating) subunit 1 (448 aa).

It belongs to the GcvP family. N-terminal subunit subfamily. In terms of assembly, the glycine cleavage system is composed of four proteins: P, T, L and H. In this organism, the P 'protein' is a heterodimer of two subunits.

It carries out the reaction N(6)-[(R)-lipoyl]-L-lysyl-[glycine-cleavage complex H protein] + glycine + H(+) = N(6)-[(R)-S(8)-aminomethyldihydrolipoyl]-L-lysyl-[glycine-cleavage complex H protein] + CO2. The glycine cleavage system catalyzes the degradation of glycine. The P protein binds the alpha-amino group of glycine through its pyridoxal phosphate cofactor; CO(2) is released and the remaining methylamine moiety is then transferred to the lipoamide cofactor of the H protein. This is Probable glycine dehydrogenase (decarboxylating) subunit 1 from Geobacillus thermodenitrificans (strain NG80-2).